The chain runs to 262 residues: tRNA pseudouridine synthase A (262 aa).

Aspartate 52 (nucleophile) is an active-site residue. Tyrosine 103 serves as a coordination point for substrate.

This sequence belongs to the tRNA pseudouridine synthase TruA family.

The enzyme catalyses uridine(38/39/40) in tRNA = pseudouridine(38/39/40) in tRNA. In terms of biological role, formation of pseudouridine at positions 38, 39 and 40 in the anticodon stem and loop of transfer RNAs. The protein is tRNA pseudouridine synthase A of Methanococcus maripaludis (strain C6 / ATCC BAA-1332).